The following is a 624-amino-acid chain: Chromosomal replication initiator protein DnaA (624 aa).

Residues 1-99 are domain I, interacts with DnaA modulators; it reads MADVPADLAA…SAGEPPSPPA (99 aa). The interval 88–284 is disordered; sequence DDSAGEPPSP…APGPGEPHAR (197 aa). Residues 100–283 form a domain II region; sequence PPMHQSHQSQ…PAPGPGEPHA (184 aa). Residues 102 to 112 show a composition bias toward low complexity; sequence MHQSHQSQQGH. Composition is skewed to basic and acidic residues over residues 118–141 and 176–206; these read QRDDAPRGDAYDGYGHRPSDDGMP and GYQDREQPSGEPYRESESYRERENEQYREQA. Over residues 250 to 264 the composition is skewed to gly residues; sequence PRQGGHGPGRTGGSV. Positions 284-500 are domain III, AAA+ region; that stretch reads RLNPKYLFDT…GALIRVTAFA (217 aa). ATP is bound by residues Gly-328, Gly-330, Lys-331, and Thr-332. Residues 501-624 are domain IV, binds dsDNA; that stretch reads SLNRQPVDLG…TELTNRIKNG (124 aa).

It belongs to the DnaA family. Oligomerizes as a right-handed, spiral filament on DNA at oriC.

The protein localises to the cytoplasm. In terms of biological role, plays an essential role in the initiation and regulation of chromosomal replication. ATP-DnaA binds to the origin of replication (oriC) to initiate formation of the DNA replication initiation complex once per cell cycle. Binds the DnaA box (a 9 base pair repeat at the origin) and separates the double-stranded (ds)DNA. Forms a right-handed helical filament on oriC DNA; dsDNA binds to the exterior of the filament while single-stranded (ss)DNA is stabiized in the filament's interior. The ATP-DnaA-oriC complex binds and stabilizes one strand of the AT-rich DNA unwinding element (DUE), permitting loading of DNA polymerase. After initiation quickly degrades to an ADP-DnaA complex that is not apt for DNA replication. Binds acidic phospholipids. Its function is as follows. The DnaA box consensus is 5'-(T/C)(T/C)(G/AC)TCCACA-3'. The polypeptide is Chromosomal replication initiator protein DnaA (Streptomyces anulatus (Streptomyces chrysomallus)).